The primary structure comprises 433 residues: Serine hydroxymethyltransferase (433 aa).

(6S)-5,6,7,8-tetrahydrofolate-binding positions include L132 and 136-138 (GHL). K241 carries the post-translational modification N6-(pyridoxal phosphate)lysine.

This sequence belongs to the SHMT family. In terms of assembly, homodimer. Pyridoxal 5'-phosphate is required as a cofactor.

It is found in the cytoplasm. The catalysed reaction is (6R)-5,10-methylene-5,6,7,8-tetrahydrofolate + glycine + H2O = (6S)-5,6,7,8-tetrahydrofolate + L-serine. It functions in the pathway one-carbon metabolism; tetrahydrofolate interconversion. The protein operates within amino-acid biosynthesis; glycine biosynthesis; glycine from L-serine: step 1/1. Its function is as follows. Catalyzes the reversible interconversion of serine and glycine with tetrahydrofolate (THF) serving as the one-carbon carrier. This reaction serves as the major source of one-carbon groups required for the biosynthesis of purines, thymidylate, methionine, and other important biomolecules. Also exhibits THF-independent aldolase activity toward beta-hydroxyamino acids, producing glycine and aldehydes, via a retro-aldol mechanism. The polypeptide is Serine hydroxymethyltransferase (Afipia carboxidovorans (strain ATCC 49405 / DSM 1227 / KCTC 32145 / OM5) (Oligotropha carboxidovorans)).